A 196-amino-acid polypeptide reads, in one-letter code: Carnitine operon protein CaiE (196 aa).

The disordered stretch occupies residues 173-196; sequence TQPLRQMEGNRPRLQGTTDVAPKR.

The protein belongs to the transferase hexapeptide repeat family.

Its pathway is amine and polyamine metabolism; carnitine metabolism. Functionally, overproduction of CaiE stimulates the activity of CaiB and CaiD. In Escherichia coli (strain SMS-3-5 / SECEC), this protein is Carnitine operon protein CaiE.